We begin with the raw amino-acid sequence, 259 residues long: Hydroxyethylthiazole kinase (259 aa).

Residue M37 coordinates substrate. ATP is bound by residues R113 and T158. G185 serves as a coordination point for substrate.

It belongs to the Thz kinase family. Mg(2+) serves as cofactor.

The catalysed reaction is 5-(2-hydroxyethyl)-4-methylthiazole + ATP = 4-methyl-5-(2-phosphooxyethyl)-thiazole + ADP + H(+). Its pathway is cofactor biosynthesis; thiamine diphosphate biosynthesis; 4-methyl-5-(2-phosphoethyl)-thiazole from 5-(2-hydroxyethyl)-4-methylthiazole: step 1/1. In terms of biological role, catalyzes the phosphorylation of the hydroxyl group of 4-methyl-5-beta-hydroxyethylthiazole (THZ). In Helicobacter pylori (strain Shi470), this protein is Hydroxyethylthiazole kinase.